The following is a 234-amino-acid chain: Sugar fermentation stimulation protein homolog (234 aa).

It belongs to the SfsA family.

This is Sugar fermentation stimulation protein homolog from Shewanella loihica (strain ATCC BAA-1088 / PV-4).